The sequence spans 563 residues: Rhodopsin kinase GRK1 (563 aa).

An interaction with RCVRN region spans residues 1–15 (MDFGSLETVVANSAF). Residues 1 to 189 (MDFGSLETVV…LEAQPMGEDW (189 aa)) are N-terminal. Residue Ser5 is modified to Phosphoserine. Thr8 carries the post-translational modification Phosphothreonine. Residue Ser21 is modified to Phosphoserine; by PKA and autocatalysis. Residues 58 to 175 (FESVCLEQPI…LGSLYFLRFL (118 aa)) form the RGS domain. The region spanning 190–455 (FLDFRVLGKG…CDKLRAHPLF (266 aa)) is the Protein kinase domain. ATP is bound by residues 196-204 (LGKGGFGEV) and Lys219. Asp317 serves as the catalytic Proton acceptor. In terms of domain architecture, AGC-kinase C-terminal spans 456-521 (KDLNWRQLEA…GNCPIPWQEE (66 aa)). Residues 456 to 563 (KDLNWRQLEA…SSKSGMCLVS (108 aa)) form a C-terminal region. Ser491 is subject to Phosphoserine; by autocatalysis. Thr492 carries the post-translational modification Phosphothreonine; by autocatalysis. A disordered region spans residues 539-563 (QMPDDMKGISGGSSSSSKSGMCLVS). Positions 550 to 563 (GSSSSSKSGMCLVS) are enriched in low complexity. Cysteine methyl ester is present on Cys560. Cys560 carries S-farnesyl cysteine lipidation. Residues 561–563 (LVS) constitute a propeptide, removed in mature form.

It belongs to the protein kinase superfamily. AGC Ser/Thr protein kinase family. GPRK subfamily. Interacts (via N-terminus) with RCVRN (via C-terminus); the interaction is Ca(2+)-dependent. Interacts (when prenylated) with PDE6D; this promotes release from membranes. May form a complex composed of RHO, GRK1 and RCVRN in a Ca(2+)-dependent manner; RCVRN prevents the interaction between GRK1 and RHO. In terms of processing, autophosphorylated, Ser-21 is a minor site of autophosphorylation compared to Ser-491 and Thr-492. Phosphorylation at Ser-21 is regulated by light and activated by cAMP. Post-translationally, farnesylation is required for full activity. As to expression, retinal-specific. Expressed in rods and cones cells.

It is found in the membrane. The protein localises to the cell projection. The protein resides in the cilium. Its subcellular location is the photoreceptor outer segment. The enzyme catalyses L-threonyl-[rhodopsin] + ATP = O-phospho-L-threonyl-[rhodopsin] + ADP + H(+). It catalyses the reaction L-seryl-[rhodopsin] + ATP = O-phospho-L-seryl-[rhodopsin] + ADP + H(+). With respect to regulation, inhibited by RCVRN, which prevents the interaction between GRK1 and RHO. Inhibition is calcium-dependent. Inhibited by phosphorylation of Ser-21. Retina-specific kinase involved in the signal turnoff via phosphorylation of rhodopsin (RHO), the G protein- coupled receptor that initiates the phototransduction cascade. This rapid desensitization is essential for scotopic vision and permits rapid adaptation to changes in illumination. May play a role in the maintenance of the outer nuclear layer in the retina. The sequence is that of Rhodopsin kinase GRK1 from Homo sapiens (Human).